The primary structure comprises 334 residues: MEQTTLLRLAGAGLTALAGALALGPVVIPLMRRLRAGQTIRAEMSARHQAKAGTPTMGGVIFIIPAILATLIFAPRSGDALPRLIIALVLTVGHGLVGFADDYIKVVLKRSLGLRARDKLLAQVGLAAVLGYGAVEVLGLGTAVTLPVLNLTLELGRPLYYLLVLIMVWGTASAVNFADGLDGLLGGLSVITFSFYGLVVALALGQTDMAVLGTALVGGVLGFLHYNRHPARIFMGDVGSFALGGALAALAVLTKTEFLLVIVGAVYVIEVISVILQVLSFRLTGRRIFKMAPLHHHFELLGWSEGQVLRLFWGAGLLFTLLGWLVLPGMLAGR.

Helical transmembrane passes span 11–31, 55–75, 84–104, 124–144, 158–178, 184–204, 205–225, 233–253, 258–278, and 311–331; these read GAGL…IPLM, PTMG…IFAP, LIIA…DDYI, VGLA…GTAV, PLYY…VNFA, LLGG…ALAL, GQTD…GFLH, IFMG…LAVL, FLLV…ILQV, and LFWG…PGML.

Belongs to the glycosyltransferase 4 family. MraY subfamily. The cofactor is Mg(2+).

The protein resides in the cell membrane. It catalyses the reaction UDP-N-acetyl-alpha-D-muramoyl-L-alanyl-gamma-D-glutamyl-meso-2,6-diaminopimeloyl-D-alanyl-D-alanine + di-trans,octa-cis-undecaprenyl phosphate = di-trans,octa-cis-undecaprenyl diphospho-N-acetyl-alpha-D-muramoyl-L-alanyl-D-glutamyl-meso-2,6-diaminopimeloyl-D-alanyl-D-alanine + UMP. Its pathway is cell wall biogenesis; peptidoglycan biosynthesis. Functionally, catalyzes the initial step of the lipid cycle reactions in the biosynthesis of the cell wall peptidoglycan: transfers peptidoglycan precursor phospho-MurNAc-pentapeptide from UDP-MurNAc-pentapeptide onto the lipid carrier undecaprenyl phosphate, yielding undecaprenyl-pyrophosphoryl-MurNAc-pentapeptide, known as lipid I. The chain is Phospho-N-acetylmuramoyl-pentapeptide-transferase from Symbiobacterium thermophilum (strain DSM 24528 / JCM 14929 / IAM 14863 / T).